The primary structure comprises 72 residues: Translation initiation factor IF-1 (72 aa).

In terms of domain architecture, S1-like spans 1–72 (MAKEDSIEMQ…SKGRIVFRSR (72 aa)).

Belongs to the IF-1 family. Component of the 30S ribosomal translation pre-initiation complex which assembles on the 30S ribosome in the order IF-2 and IF-3, IF-1 and N-formylmethionyl-tRNA(fMet); mRNA recruitment can occur at any time during PIC assembly.

The protein resides in the cytoplasm. Its function is as follows. One of the essential components for the initiation of protein synthesis. Stabilizes the binding of IF-2 and IF-3 on the 30S subunit to which N-formylmethionyl-tRNA(fMet) subsequently binds. Helps modulate mRNA selection, yielding the 30S pre-initiation complex (PIC). Upon addition of the 50S ribosomal subunit IF-1, IF-2 and IF-3 are released leaving the mature 70S translation initiation complex. This chain is Translation initiation factor IF-1, found in Aeromonas hydrophila subsp. hydrophila (strain ATCC 7966 / DSM 30187 / BCRC 13018 / CCUG 14551 / JCM 1027 / KCTC 2358 / NCIMB 9240 / NCTC 8049).